A 251-amino-acid polypeptide reads, in one-letter code: Uroporphyrinogen-III synthase (251 aa).

The interval 231–251 (PAPNPESLASSIVAFDEENSS) is disordered.

The protein belongs to the uroporphyrinogen-III synthase family.

It catalyses the reaction hydroxymethylbilane = uroporphyrinogen III + H2O. Its pathway is porphyrin-containing compound metabolism; protoporphyrin-IX biosynthesis; coproporphyrinogen-III from 5-aminolevulinate: step 3/4. Catalyzes cyclization of the linear tetrapyrrole, hydroxymethylbilane, to the macrocyclic uroporphyrinogen III. This is Uroporphyrinogen-III synthase (ups1) from Schizosaccharomyces pombe (strain 972 / ATCC 24843) (Fission yeast).